Reading from the N-terminus, the 601-residue chain is Elongation factor 4 (601 aa).

The region spanning 6–188 (DHIRNFSIVA…AIVHQLPPPR (183 aa)) is the tr-type G domain. Residues 18–23 (DHGKST) and 135–138 (NKVD) each bind GTP.

The protein belongs to the TRAFAC class translation factor GTPase superfamily. Classic translation factor GTPase family. LepA subfamily.

The protein resides in the cell inner membrane. It catalyses the reaction GTP + H2O = GDP + phosphate + H(+). Functionally, required for accurate and efficient protein synthesis under certain stress conditions. May act as a fidelity factor of the translation reaction, by catalyzing a one-codon backward translocation of tRNAs on improperly translocated ribosomes. Back-translocation proceeds from a post-translocation (POST) complex to a pre-translocation (PRE) complex, thus giving elongation factor G a second chance to translocate the tRNAs correctly. Binds to ribosomes in a GTP-dependent manner. This Mesorhizobium japonicum (strain LMG 29417 / CECT 9101 / MAFF 303099) (Mesorhizobium loti (strain MAFF 303099)) protein is Elongation factor 4.